The primary structure comprises 3117 residues: Centrosome-associated protein 350 (3117 aa).

The segment at 1 to 24 (MRSSKSKEVPLPNPRNSQSKDTVQ) is disordered. The span at 14–24 (PRNSQSKDTVQ) shows a compositional bias: polar residues. 4 positions are modified to phosphoserine: Ser86, Ser139, Ser142, and Ser218. 4 disordered regions span residues 249–275 (PKAL…ILKR), 436–514 (ILGP…NKQE), 548–625 (TVEL…TEQK), and 671–722 (LEEP…PPQP). Residues 255 to 267 (TDSSPSSTSTSNS) are compositionally biased toward low complexity. A compositionally biased stretch (basic and acidic residues) spans 469–501 (GRAESDPRLDVLHRHLQRNSERSRSKSRSENNI). Phosphoserine occurs at positions 473 and 507. Basic residues predominate over residues 563-573 (PRSHSPVKRKP). Basic and acidic residues-rich tracts occupy residues 591–625 (YDTD…TEQK) and 694–703 (ESDKENKVQE). A coiled-coil region spans residues 598 to 645 (QYIVRQQEERKRKQNEEKKAQKEATEQKNKRLQELYRKQKEAFTKVKN). A Phosphoserine modification is found at Ser695. A compositionally biased stretch (low complexity) spans 705 to 718 (PPSASSSSDMSLSE). The residue at position 878 (Thr878) is a Phosphothreonine. Ser939 carries the phosphoserine modification. Residues 981-992 (SVSEGPLLSEGS) show a composition bias toward low complexity. Positions 981–1002 (SVSEGPLLSEGSLSEEEGDQDG) are disordered. Ser1061 is subject to Phosphoserine. The segment at 1081–1298 (EDKLDRGTST…GFKPNAPLTD (218 aa)) is disordered. Residues 1087-1102 (GTSTSRPLNATATPLS) are compositionally biased toward polar residues. The segment covering 1135–1144 (QEDHSNRKSA) has biased composition (basic and acidic residues). Low complexity-rich tracts occupy residues 1153–1172 (TSQH…STSS) and 1251–1267 (QKTP…KSLQ). Position 1253 is a phosphothreonine (Thr1253). Residues Ser1256 and Ser1259 each carry the phosphoserine modification. Residues 1272 to 1283 (GTSSERSKSSVM) show a composition bias toward polar residues. Residues 1369-1411 (IKAQQQRHERDLALLKLKAEQEALESQRQLEETRNKAAQVHAE) adopt a coiled-coil conformation. 2 disordered regions span residues 1494 to 1674 (TRTE…GGQD) and 1794 to 1854 (KLKS…SRMD). A compositionally biased stretch (polar residues) spans 1503–1512 (PSVSLSQSKE). Low complexity-rich tracts occupy residues 1522–1535 (YSAS…SSGY) and 1543–1556 (SSGS…SVPS). The segment covering 1558 to 1571 (KENEKKLNGEKIES) has biased composition (basic and acidic residues). At Ser1613 the chain carries Phosphoserine. A compositionally biased stretch (basic and acidic residues) spans 1631-1647 (ESHRRFNMEKRRGHHDD). 2 positions are modified to phosphoserine: Ser1648 and Ser1653. Residues 1707–1800 (KALKEKTKAE…LQEKLKSAGE (94 aa)) are a coiled coil. A compositionally biased stretch (basic and acidic residues) spans 1794 to 1815 (KLKSAGESKLDSHSDDDTKDNK). Residue Ser1818 is modified to Phosphoserine. A compositionally biased stretch (low complexity) spans 1827–1841 (RSPSPISISSSETSS). Residues 1856-1899 (KFLTKREQKLMQRRQHAEELLEWKRRLDAEEAEIRQMEKQALAA) are a coiled coil. The span at 1903 to 1925 (ELIKPKTPKKELEDQRTEQKEIA) shows a compositional bias: basic and acidic residues. Disordered stretches follow at residues 1903–2020 (ELIK…QCHL), 2107–2221 (ELSQ…ESGD), 2329–2356 (LKER…QKNT), and 2407–2432 (KDSQ…FGSN). A Phosphoserine modification is found at Ser1936. Polar residues predominate over residues 1983–2005 (ELESSTSPSKHSLPKSCTSVSKQ). Residues 2051–2110 (EGRIRALKDELRKRKSVVNQLKKEQKKRQKERLKAQEASLIKQLESYDEFIKKTEAELSQ) adopt a coiled-coil conformation. Residues 2111-2129 (DLETSPTAKPQIKTLSSAS) are compositionally biased toward polar residues. Residue Ser2115 is modified to Phosphoserine. Residues 2141–2170 (HRSETAKNWKSLTESERSRGSLESIAEHVD) are compositionally biased toward basic and acidic residues. Residues 2173-2184 (LSGSERSVSERS) are compositionally biased toward polar residues. Residues 2191–2201 (RVNEWDSRTED) are compositionally biased toward basic and acidic residues. At Thr2204 the chain carries Phosphothreonine. At Ser2206 the chain carries Phosphoserine. Basic and acidic residues-rich tracts occupy residues 2329–2338 (LKERQSDQDM) and 2407–2417 (KDSQSCRDKPQ). The segment covering 2419 to 2432 (MRSSTSGATSFGSN) has biased composition (polar residues). Ser2431 and Ser2460 each carry phosphoserine. The span at 2465-2478 (MKSKERSDVEHEQQ) shows a compositional bias: basic and acidic residues. Residues 2465-2485 (MKSKERSDVEHEQQVTESPSL) are disordered. One can recognise a CAP-Gly domain in the interval 2517 to 2559 (GETSFAKGFWAGVELDKPEGNNNGTYDGIAYFECKEKHGIFAP). Thr2689 is subject to Phosphothreonine. Residues 2719-2752 (LLDLLTREKNQLEAQLKSSLNEEKKSKQQLEKIS) are a coiled coil. A phosphoserine mark is found at Ser2830 and Ser2839.

Part of a ternary complex that contains CEP350, CEP43 and MAPRE1. Interacts (via C-terminus) directly with CEP43 (via N-terminus). Interacts with NR1H3, PPARA, PPARD and PPARG. Interacts directly with microtubules. Interacts with the fusion protein CEP43-FGFR1, and by doing so recruits and activates PI3K and PLC-gamma. Interacts with CYLD. Interacts with CFAP157. Interacts with CEP19 (via C-terminus). Interacts with CEP78; promoting CEP78 localization to centrosome and centriole. In terms of processing, phosphorylated during mitosis. In terms of tissue distribution, detected in heart, brain, skeletal muscle, testis, placenta, lung, liver, kidney and pancreas.

It localises to the cytoplasm. The protein resides in the cytoskeleton. The protein localises to the microtubule organizing center. Its subcellular location is the centrosome. It is found in the spindle. It localises to the nucleus. The protein resides in the centriole. The protein localises to the cilium basal body. Its function is as follows. Plays an essential role in centriole growth by stabilizing a procentriolar seed composed of at least, SASS6 and CPAP. Required for anchoring microtubules to the centrosomes and for the integrity of the microtubule network. Recruits PPARA to discrete subcellular compartments and thereby modulates PPARA activity. Required for ciliation. This Homo sapiens (Human) protein is Centrosome-associated protein 350.